The chain runs to 295 residues: UDP-3-O-acyl-N-acetylglucosamine deacetylase (295 aa).

Residues histidine 77, histidine 233, and aspartate 237 each coordinate Zn(2+). Catalysis depends on histidine 260, which acts as the Proton donor.

Belongs to the LpxC family. It depends on Zn(2+) as a cofactor.

The enzyme catalyses a UDP-3-O-[(3R)-3-hydroxyacyl]-N-acetyl-alpha-D-glucosamine + H2O = a UDP-3-O-[(3R)-3-hydroxyacyl]-alpha-D-glucosamine + acetate. It functions in the pathway glycolipid biosynthesis; lipid IV(A) biosynthesis; lipid IV(A) from (3R)-3-hydroxytetradecanoyl-[acyl-carrier-protein] and UDP-N-acetyl-alpha-D-glucosamine: step 2/6. Its function is as follows. Catalyzes the hydrolysis of UDP-3-O-myristoyl-N-acetylglucosamine to form UDP-3-O-myristoylglucosamine and acetate, the committed step in lipid A biosynthesis. This is UDP-3-O-acyl-N-acetylglucosamine deacetylase from Solibacter usitatus (strain Ellin6076).